The primary structure comprises 148 residues: Large ribosomal subunit protein uL15 (148 aa).

The tract at residues Met1–Leu61 is disordered. The span at Thr30–Lys39 shows a compositional bias: basic residues.

This sequence belongs to the universal ribosomal protein uL15 family. Part of the 50S ribosomal subunit.

Its function is as follows. Binds to the 23S rRNA. This chain is Large ribosomal subunit protein uL15, found in Geobacter metallireducens (strain ATCC 53774 / DSM 7210 / GS-15).